The following is a 245-amino-acid chain: Cytochrome P450 CYP82H23 (245 aa).

This sequence belongs to the cytochrome P450 family. Heme serves as cofactor.

Its function is as follows. Probable heme-thiolate monooxygenase. This Panax ginseng (Korean ginseng) protein is Cytochrome P450 CYP82H23.